Consider the following 263-residue polypeptide: MEIILFDNKINSRFNKVTSTNYAAKLDQTSEIWLFNCIENTQHIFLKSQLKLSQITKIFISGTSFKYAAGLPGLLSSLTLSGKINTVSIYGPNSLKAYLQACTKYSQTNFSFSVNFHAVSYGKLVSGQSYTVICLPLSSNKLLYGFTILKKQQQGVFNLKKAITLNISQGPIYGELKGKHNFLSPDGYYLHGEDFSSSTTLGNKISIPVVLKYSRIISEMHWLSSYTVKSNTYPHQQATKYLLSNIETNVMNYQVSQDNNLIE.

This sequence belongs to the AtsA family.

It is found in the plastid. Its subcellular location is the chloroplast. This is an uncharacterized protein from Porphyra purpurea (Red seaweed).